The chain runs to 263 residues: Putative steroid dehydrogenase 4 (263 aa).

Y154 functions as the Proton acceptor in the catalytic mechanism.

This sequence belongs to the short-chain dehydrogenases/reductases (SDR) family. 17-beta-HSD 3 subfamily.

In Caenorhabditis elegans, this protein is Putative steroid dehydrogenase 4 (stdh-4).